The following is a 503-amino-acid chain: Maturase K (503 aa).

The protein belongs to the intron maturase 2 family. MatK subfamily.

It is found in the plastid. The protein localises to the chloroplast. Usually encoded in the trnK tRNA gene intron. Probably assists in splicing its own and other chloroplast group II introns. The polypeptide is Maturase K (Vicia villosa (Hairy vetch)).